Here is a 507-residue protein sequence, read N- to C-terminus: MSLQWLQQTRHELSWTWILLTTCIALTSPLVLKGIYNVYFHPLRNIPGPKLAALTDFYAFYWNWIRDEGYSKQFSRLHEQYNSPIIRIGPNNVHTTQVEFYDVIFKSGSKWLKDKSFYKYFNGLDAMIEPYQYRTYRTHLAPLYAQRAIDGLAPKLRSDLTNSASGMMRQTENGQTVNMAKVLRTLSTSMILHNLFSLDISLNDGDEYHPFLEAFEQLMTQSWLFVTYPMVPMVLSLIPGTSFARFNSSYTTFSNYCTAWNDEDMRKQRESEGQSTRDSHTRRYLSLKDDDARKKTAIPYPLDDVFNFVAGGSDTTAYTTACAFYHILSSPTVRENLVVELDEHSSIIRDEFDYNKIQNLPYLNAVIKETLRISVPVPGSLPRIVPQGGITIGSFSLPAGTGVSITQQAISFNEKIFPLPHSFLPERWIGPKSVGLDKWNIAFSRGPRQCIGTTLAYLELRCVIAYFFSRFDMALTGNCGDQLRWVDRFVAVNLDDVEVQILADRWT.

The helical transmembrane segment at 15–35 (WTWILLTTCIALTSPLVLKGI) threads the bilayer. N-linked (GlcNAc...) asparagine glycosylation is present at Asn247. Position 450 (Cys450) interacts with heme.

This sequence belongs to the cytochrome P450 family. Heme is required as a cofactor.

It is found in the membrane. It functions in the pathway alkaloid biosynthesis; ergot alkaloid biosynthesis. Functionally, cytochrome P450 monooxygenase; part of the gene cluster that mediates the biosynthesis of fungal ergot alkaloid. DmaW catalyzes the first step of ergot alkaloid biosynthesis by condensing dimethylallyl diphosphate (DMAP) and tryptophan to form 4-dimethylallyl-L-tryptophan. The second step is catalyzed by the methyltransferase easF that methylates 4-dimethylallyl-L-tryptophan in the presence of S-adenosyl-L-methionine, resulting in the formation of 4-dimethylallyl-L-abrine. The catalase easC and the FAD-dependent oxidoreductase easE then transform 4-dimethylallyl-L-abrine to chanoclavine-I which is further oxidized by easD in the presence of NAD(+), resulting in the formation of chanoclavine-I aldehyde. Agroclavine dehydrogenase easG then mediates the conversion of chanoclavine-I aldehyde to agroclavine via a non-enzymatic adduct reaction: the substrate is an iminium intermediate that is formed spontaneously from chanoclavine-I aldehyde in the presence of glutathione. The presence of easA is not required to complete this reaction. Further conversion of agroclavine to paspalic acid is a two-step process involving oxidation of agroclavine to elymoclavine and of elymoclavine to paspalic acid, the second step being performed by the elymoclavine oxidase cloA. Paspalic acid is then further converted to D-lysergic acid. Ergopeptines are assembled from D-lysergic acid and three different amino acids by the D-lysergyl-peptide-synthetases composed each of a monomudular and a trimodular nonribosomal peptide synthetase subunit. LpsB and lpsC encode the monomodular subunits responsible for D-lysergic acid activation and incorporation into the ergopeptine backbone. LpsA1 and A2 subunits encode the trimodular nonribosomal peptide synthetase assembling the tripeptide portion of ergopeptines. LpsA1 is responsible for formation of the major ergopeptine, ergotamine, and lpsA2 for alpha-ergocryptine, the minor ergopeptine of the total alkaloid mixture elaborated by C.purpurea. D-lysergyl-tripeptides are assembled by the nonribosomal peptide synthetases and released as N-(D-lysergyl-aminoacyl)-lactams. Cyclolization of the D-lysergyl-tripeptides is performed by the Fe(2+)/2-ketoglutarate-dependent dioxygenase easH which introduces a hydroxyl group into N-(D-lysergyl-aminoacyl)-lactam at alpha-C of the aminoacyl residue followed by spontaneous condensation with the terminal lactam carbonyl group. The sequence is that of Cytochrome P450 monooxygenase cloA from Claviceps purpurea (Ergot fungus).